A 184-amino-acid chain; its full sequence is Photosystem I assembly protein Ycf4 (184 aa).

The next 2 membrane-spanning stretches (helical) occupy residues 19 to 39 (ISNF…LLVG) and 57 to 77 (IIFF…LFIS).

It belongs to the Ycf4 family.

The protein localises to the plastid. Its subcellular location is the chloroplast thylakoid membrane. Functionally, seems to be required for the assembly of the photosystem I complex. The chain is Photosystem I assembly protein Ycf4 from Nicotiana sylvestris (Wood tobacco).